A 125-amino-acid chain; its full sequence is Large ribosomal subunit protein bL12 (125 aa).

This sequence belongs to the bacterial ribosomal protein bL12 family. In terms of assembly, homodimer. Part of the ribosomal stalk of the 50S ribosomal subunit. Forms a multimeric L10(L12)X complex, where L10 forms an elongated spine to which 2 to 4 L12 dimers bind in a sequential fashion. Binds GTP-bound translation factors.

Forms part of the ribosomal stalk which helps the ribosome interact with GTP-bound translation factors. Is thus essential for accurate translation. The sequence is that of Large ribosomal subunit protein bL12 from Chelativorans sp. (strain BNC1).